The chain runs to 118 residues: Aspartate 1-decarboxylase 1 (118 aa).

The active-site Schiff-base intermediate with substrate; via pyruvic acid is the Ser25. A Pyruvic acid (Ser) modification is found at Ser25. Position 57 (Thr57) interacts with substrate. Tyr58 serves as the catalytic Proton donor. 73–75 (GAA) lines the substrate pocket.

This sequence belongs to the PanD family. Heterooctamer of four alpha and four beta subunits. It depends on pyruvate as a cofactor. Post-translationally, is synthesized initially as an inactive proenzyme, which is activated by self-cleavage at a specific serine bond to produce a beta-subunit with a hydroxyl group at its C-terminus and an alpha-subunit with a pyruvoyl group at its N-terminus.

The protein resides in the cytoplasm. The enzyme catalyses L-aspartate + H(+) = beta-alanine + CO2. Its pathway is cofactor biosynthesis; (R)-pantothenate biosynthesis; beta-alanine from L-aspartate: step 1/1. In terms of biological role, catalyzes the pyruvoyl-dependent decarboxylation of aspartate to produce beta-alanine. The sequence is that of Aspartate 1-decarboxylase 1 from Gloeobacter violaceus (strain ATCC 29082 / PCC 7421).